The chain runs to 835 residues: Protein translocase subunit SecA (835 aa).

Residues Q85, 103–107 (GEGKT), and D492 each bind ATP. Positions 788–807 (VQGEAVHPSSDGEEAKKKPV) are disordered. 4 residues coordinate Zn(2+): C819, C821, C830, and C831.

The protein belongs to the SecA family. Monomer and homodimer. Part of the essential Sec protein translocation apparatus which comprises SecA, SecYEG and auxiliary proteins SecDF. Other proteins may also be involved. It depends on Zn(2+) as a cofactor.

It is found in the cell membrane. The protein resides in the cytoplasm. The enzyme catalyses ATP + H2O + cellular proteinSide 1 = ADP + phosphate + cellular proteinSide 2.. Functionally, part of the Sec protein translocase complex. Interacts with the SecYEG preprotein conducting channel. Has a central role in coupling the hydrolysis of ATP to the transfer of proteins into and across the cell membrane, serving as an ATP-driven molecular motor driving the stepwise translocation of polypeptide chains across the membrane. The sequence is that of Protein translocase subunit SecA from Bacillus cereus (strain B4264).